Consider the following 145-residue polypeptide: Superoxide dismutase [Mn/Fe] (145 aa).

Fe(3+) contacts are provided by His-10 and His-64. Mn(2+) contacts are provided by His-10 and His-64.

The protein belongs to the iron/manganese superoxide dismutase family. Requires Mn(2+) as cofactor. The cofactor is Fe(3+).

The catalysed reaction is 2 superoxide + 2 H(+) = H2O2 + O2. Destroys superoxide anion radicals which are normally produced within the cells and which are toxic to biological systems. Catalyzes the dismutation of superoxide anion radicals into O2 and H2O2 by successive reduction and oxidation of the transition metal ion at the active site. The sequence is that of Superoxide dismutase [Mn/Fe] (sodA) from Streptococcus salivarius.